The sequence spans 352 residues: Gamma-aminobutyric acid-binding protein (352 aa).

The N-terminal stretch at 1-28 is a signal peptide; that stretch reads MFKSLHQYAHVFSRLSLFGLAFAAAAQA.

This sequence belongs to the bacterial solute-binding protein 1 family.

Its subcellular location is the periplasm. Binds specifically gamma-aminobutyric acid (GABA) with nanomolar affinity. Does not bind structurally related compounds such as 4-aminovaleric acid, spermidine, histamine and butyric acid. The sequence is that of Gamma-aminobutyric acid-binding protein from Pseudomonas aeruginosa (strain ATCC 15692 / DSM 22644 / CIP 104116 / JCM 14847 / LMG 12228 / 1C / PRS 101 / PAO1).